Consider the following 440-residue polypeptide: GTPase Der (440 aa).

2 consecutive EngA-type G domains span residues 3 to 168 and 177 to 353; these read PIIA…GKMD and LKLA…EEYT. GTP is bound by residues 9–16, 56–60, 119–122, 183–190, 230–234, and 295–298; these read GRPNVGKS, DTGGL, NKID, GKPNAGKS, DTAGI, and NKWD. One can recognise a KH-like domain in the interval 354–438; that stretch reads KRISTGLLNT…PIMISFENKS (85 aa).

The protein belongs to the TRAFAC class TrmE-Era-EngA-EngB-Septin-like GTPase superfamily. EngA (Der) GTPase family. As to quaternary structure, associates with the 50S ribosomal subunit.

Its function is as follows. GTPase that plays an essential role in the late steps of ribosome biogenesis. This is GTPase Der from Fusobacterium nucleatum subsp. nucleatum (strain ATCC 25586 / DSM 15643 / BCRC 10681 / CIP 101130 / JCM 8532 / KCTC 2640 / LMG 13131 / VPI 4355).